Here is a 440-residue protein sequence, read N- to C-terminus: Glyceraldehyde-3-phosphate dehydrogenase, testis-specific (440 aa).

Positions 1-105 are testis-specific N-terminal extension; the sequence is MSRRDVVLTN…PPPPPLQKPA (105 aa). Composition is skewed to pro residues over residues 40–75 and 83–102; these read PPKLEDPPPTVEEQPPPPPPPPPPPPPPPPPPPPQI and APPPPPPPPPPPPPPPPPLQ. The segment at 40–106 is disordered; the sequence is PPKLEDPPPT…PPPPLQKPAR (67 aa). NAD(+) is bound by residues 117–118, Asp-138, Lys-183, Tyr-205, and Thr-225; that span reads RI. D-glyceraldehyde 3-phosphate contacts are provided by residues 255 to 257, Thr-286, 315 to 316, and Arg-338; these read SCT and TG. The Nucleophile role is filled by Cys-256. A Phosphoserine modification is found at Ser-358. Residue Asn-420 participates in NAD(+) binding.

It belongs to the glyceraldehyde-3-phosphate dehydrogenase family. In terms of assembly, homotetramer. As to expression, testis specific.

It localises to the cytoplasm. It carries out the reaction D-glyceraldehyde 3-phosphate + phosphate + NAD(+) = (2R)-3-phospho-glyceroyl phosphate + NADH + H(+). It participates in carbohydrate degradation; glycolysis; pyruvate from D-glyceraldehyde 3-phosphate: step 1/5. May play an important role in regulating the switch between different pathways for energy production during spermiogenesis and in the spermatozoon. Required for sperm motility and male fertility. The protein is Glyceraldehyde-3-phosphate dehydrogenase, testis-specific (Gapdhs) of Mus musculus (Mouse).